The following is a 193-amino-acid chain: Probable nicotinate-nucleotide adenylyltransferase (193 aa).

This sequence belongs to the NadD family.

The enzyme catalyses nicotinate beta-D-ribonucleotide + ATP + H(+) = deamido-NAD(+) + diphosphate. Its pathway is cofactor biosynthesis; NAD(+) biosynthesis; deamido-NAD(+) from nicotinate D-ribonucleotide: step 1/1. In terms of biological role, catalyzes the reversible adenylation of nicotinate mononucleotide (NaMN) to nicotinic acid adenine dinucleotide (NaAD). In Chlorobium phaeovibrioides (strain DSM 265 / 1930) (Prosthecochloris vibrioformis (strain DSM 265)), this protein is Probable nicotinate-nucleotide adenylyltransferase.